The primary structure comprises 120 residues: NAD(P)H-quinone oxidoreductase subunit 3, chloroplastic (120 aa).

The next 3 helical transmembrane spans lie at 14-34 (LIIS…LAPI), 64-84 (MFAL…PWAM), and 88-108 (VLGV…IVGS).

This sequence belongs to the complex I subunit 3 family. NDH is composed of at least 16 different subunits, 5 of which are encoded in the nucleus.

The protein resides in the plastid. It localises to the chloroplast thylakoid membrane. The enzyme catalyses a plastoquinone + NADH + (n+1) H(+)(in) = a plastoquinol + NAD(+) + n H(+)(out). The catalysed reaction is a plastoquinone + NADPH + (n+1) H(+)(in) = a plastoquinol + NADP(+) + n H(+)(out). Its function is as follows. NDH shuttles electrons from NAD(P)H:plastoquinone, via FMN and iron-sulfur (Fe-S) centers, to quinones in the photosynthetic chain and possibly in a chloroplast respiratory chain. The immediate electron acceptor for the enzyme in this species is believed to be plastoquinone. Couples the redox reaction to proton translocation, and thus conserves the redox energy in a proton gradient. This chain is NAD(P)H-quinone oxidoreductase subunit 3, chloroplastic, found in Cicer arietinum (Chickpea).